The following is a 174-amino-acid chain: ATP-dependent protease subunit HslV (174 aa).

T2 is a catalytic residue. Na(+) is bound by residues G157, C160, and T163.

Belongs to the peptidase T1B family. HslV subfamily. In terms of assembly, a double ring-shaped homohexamer of HslV is capped on each side by a ring-shaped HslU homohexamer. The assembly of the HslU/HslV complex is dependent on binding of ATP.

It is found in the cytoplasm. It catalyses the reaction ATP-dependent cleavage of peptide bonds with broad specificity.. With respect to regulation, allosterically activated by HslU binding. Its function is as follows. Protease subunit of a proteasome-like degradation complex believed to be a general protein degrading machinery. This chain is ATP-dependent protease subunit HslV, found in Shewanella halifaxensis (strain HAW-EB4).